Reading from the N-terminus, the 117-residue chain is Large ribosomal subunit protein uL18 (117 aa).

The protein belongs to the universal ribosomal protein uL18 family. Part of the 50S ribosomal subunit; part of the 5S rRNA/L5/L18/L25 subcomplex. Contacts the 5S and 23S rRNAs.

In terms of biological role, this is one of the proteins that bind and probably mediate the attachment of the 5S RNA into the large ribosomal subunit, where it forms part of the central protuberance. This is Large ribosomal subunit protein uL18 from Aliivibrio fischeri (strain ATCC 700601 / ES114) (Vibrio fischeri).